A 102-amino-acid chain; its full sequence is Small ribosomal subunit protein uS10 (102 aa).

The protein belongs to the universal ribosomal protein uS10 family. Part of the 30S ribosomal subunit.

In terms of biological role, involved in the binding of tRNA to the ribosomes. The sequence is that of Small ribosomal subunit protein uS10 from Nitrosomonas eutropha (strain DSM 101675 / C91 / Nm57).